A 138-amino-acid polypeptide reads, in one-letter code: ATP synthase epsilon chain (138 aa).

This sequence belongs to the ATPase epsilon chain family. In terms of assembly, F-type ATPases have 2 components, CF(1) - the catalytic core - and CF(0) - the membrane proton channel. CF(1) has five subunits: alpha(3), beta(3), gamma(1), delta(1), epsilon(1). CF(0) has three main subunits: a, b and c.

It localises to the cell inner membrane. Its function is as follows. Produces ATP from ADP in the presence of a proton gradient across the membrane. This is ATP synthase epsilon chain from Acidovorax ebreus (strain TPSY) (Diaphorobacter sp. (strain TPSY)).